We begin with the raw amino-acid sequence, 368 residues long: MNESGSIGIIETKYAEFKELPLKNGSVLSPVVIAYETYGTLSPSKNNAILICHALSGDAHAAGYHSESDKKPGWWDDYIGPGKSFDTNQYFIICSNVIGGCKGSSGPLSIHPKTGTPYGSRFPFVSIQDMVKAQKLLVEFLGIDKLFCVAGGSMGGMQALEWSIAYPDSLLNCIVMASTAEHSAMQIAFNEVGRQAILSDPNWNNGLYDENSPRKGLALARMVGHITYLSDDKMREKFGRNPPRGNILTTDFAVGSYLIYQGESFVDRFDANSYIYVTKALDHYSLGKGKELTAALSTATCRFLIVSYSSDWLYPPAQSREIVKSLEAADKRVFYLELQSGEGHDSFLLKNPKQIEILKGFLENQSSP.

One can recognise an AB hydrolase-1 domain in the interval 47-349 (NAILICHALS…SGEGHDSFLL (303 aa)). S153 acts as the Nucleophile in catalysis. Residue R221 coordinates substrate. Active-site residues include D311 and H344. D345 provides a ligand contact to substrate.

The protein belongs to the AB hydrolase superfamily. MetX family. In terms of assembly, homodimer.

It is found in the cytoplasm. It catalyses the reaction L-homoserine + acetyl-CoA = O-acetyl-L-homoserine + CoA. The protein operates within amino-acid biosynthesis; L-methionine biosynthesis via de novo pathway; O-acetyl-L-homoserine from L-homoserine: step 1/1. Transfers an acetyl group from acetyl-CoA to L-homoserine, forming acetyl-L-homoserine. This chain is Homoserine O-acetyltransferase, found in Leptospira borgpetersenii serovar Hardjo-bovis (strain JB197).